A 492-amino-acid polypeptide reads, in one-letter code: Aspartyl/glutamyl-tRNA(Asn/Gln) amidotransferase subunit B (492 aa).

It belongs to the GatB/GatE family. GatB subfamily. As to quaternary structure, heterotrimer of A, B and C subunits.

The enzyme catalyses L-glutamyl-tRNA(Gln) + L-glutamine + ATP + H2O = L-glutaminyl-tRNA(Gln) + L-glutamate + ADP + phosphate + H(+). It catalyses the reaction L-aspartyl-tRNA(Asn) + L-glutamine + ATP + H2O = L-asparaginyl-tRNA(Asn) + L-glutamate + ADP + phosphate + 2 H(+). Functionally, allows the formation of correctly charged Asn-tRNA(Asn) or Gln-tRNA(Gln) through the transamidation of misacylated Asp-tRNA(Asn) or Glu-tRNA(Gln) in organisms which lack either or both of asparaginyl-tRNA or glutaminyl-tRNA synthetases. The reaction takes place in the presence of glutamine and ATP through an activated phospho-Asp-tRNA(Asn) or phospho-Glu-tRNA(Gln). The chain is Aspartyl/glutamyl-tRNA(Asn/Gln) amidotransferase subunit B from Bradyrhizobium sp. (strain BTAi1 / ATCC BAA-1182).